A 40-amino-acid chain; its full sequence is Photosystem II reaction center protein J (40 aa).

Residues 8–28 (IPLWLIGTVTGIPVIGLVGIF) form a helical membrane-spanning segment.

The protein belongs to the PsbJ family. As to quaternary structure, PSII is composed of 1 copy each of membrane proteins PsbA, PsbB, PsbC, PsbD, PsbE, PsbF, PsbH, PsbI, PsbJ, PsbK, PsbL, PsbM, PsbT, PsbX, PsbY, PsbZ, Psb30/Ycf12, at least 3 peripheral proteins of the oxygen-evolving complex and a large number of cofactors. It forms dimeric complexes.

It is found in the plastid. The protein resides in the chloroplast thylakoid membrane. In terms of biological role, one of the components of the core complex of photosystem II (PSII). PSII is a light-driven water:plastoquinone oxidoreductase that uses light energy to abstract electrons from H(2)O, generating O(2) and a proton gradient subsequently used for ATP formation. It consists of a core antenna complex that captures photons, and an electron transfer chain that converts photonic excitation into a charge separation. The chain is Photosystem II reaction center protein J from Cucumis sativus (Cucumber).